A 481-amino-acid polypeptide reads, in one-letter code: Proline--tRNA ligase (481 aa).

The protein belongs to the class-II aminoacyl-tRNA synthetase family. ProS type 3 subfamily. In terms of assembly, homodimer.

The protein resides in the cytoplasm. It carries out the reaction tRNA(Pro) + L-proline + ATP = L-prolyl-tRNA(Pro) + AMP + diphosphate. Its function is as follows. Catalyzes the attachment of proline to tRNA(Pro) in a two-step reaction: proline is first activated by ATP to form Pro-AMP and then transferred to the acceptor end of tRNA(Pro). The sequence is that of Proline--tRNA ligase from Chlorobium phaeovibrioides (strain DSM 265 / 1930) (Prosthecochloris vibrioformis (strain DSM 265)).